We begin with the raw amino-acid sequence, 193 residues long: Ion-translocating oxidoreductase complex subunit B (193 aa).

Residues 1–26 (MSTMLIAVILLTLLALFFGVLLGFAA) form a hydrophobic region. The 4Fe-4S domain occupies 32–90 (EGNPIVDELEAILPQTQCGQCGYPGCRPYAEAIANGDKVNKCPPGGTATMEKLASLMGV). [4Fe-4S] cluster is bound by residues Cys49, Cys52, Cys57, Cys73, Cys114, Cys117, Cys120, Cys124, Cys144, Cys147, Cys150, and Cys154. 2 4Fe-4S ferredoxin-type domains span residues 105-134 (KVAY…GAGK) and 136-164 (MHTV…MLPV).

Belongs to the 4Fe4S bacterial-type ferredoxin family. RnfB subfamily. In terms of assembly, the complex is composed of six subunits: RnfA, RnfB, RnfC, RnfD, RnfE and RnfG. [4Fe-4S] cluster serves as cofactor.

The protein localises to the cell inner membrane. In terms of biological role, part of a membrane-bound complex that couples electron transfer with translocation of ions across the membrane. The chain is Ion-translocating oxidoreductase complex subunit B from Shewanella sp. (strain MR-4).